A 571-amino-acid polypeptide reads, in one-letter code: Glutamine--tRNA ligase (571 aa).

The short motif at 35 to 45 (PEPNGYLHIGH) is the 'HIGH' region element. Residues 36-38 (EPN) and 42-48 (HIGHAKS) contribute to the ATP site. L-glutamine contacts are provided by Asp68 and Tyr213. ATP contacts are provided by residues Thr232, 262 to 263 (RL), and 270 to 272 (LSK). Positions 269–273 (ILSKR) match the 'KMSKS' region motif.

This sequence belongs to the class-I aminoacyl-tRNA synthetase family. In terms of assembly, monomer.

The protein localises to the cytoplasm. It catalyses the reaction tRNA(Gln) + L-glutamine + ATP = L-glutaminyl-tRNA(Gln) + AMP + diphosphate. This chain is Glutamine--tRNA ligase, found in Buchnera aphidicola subsp. Acyrthosiphon pisum (strain 5A).